The sequence spans 156 residues: uncharacterized protein (156 aa).

Its subcellular location is the mitochondrion. This is an uncharacterized protein from Paramecium tetraurelia.